A 434-amino-acid chain; its full sequence is Forkhead box protein A2-A (434 aa).

Residues 149 to 243 constitute a DNA-binding region (fork-head); it reads KPPYSYISLI…ENGCYLRRQK (95 aa). Over residues 249 to 262 the composition is skewed to basic and acidic residues; it reads KKPSLREGGGKKLS. Disordered stretches follow at residues 249 to 339 and 408 to 434; these read KKPS…QSHL and SGLESSPITSDTSYYQGGYSRPIMNSS. Low complexity-rich tracts occupy residues 263 to 291 and 317 to 333; these read EGASSVGSAANSSSESSVGNESPHSSSSP and ASQAQHLLSQHHSVLSH. The segment covering 408-422 has biased composition (polar residues); the sequence is SGLESSPITSDTSYY.

As to expression, at gastrula stage, expressed in both the anterior and posterior endoderm, with endodermal expression persisting into early tailbud stages. Expression is absent in gastrula stage ectoderm. During tailbud stages, expressed in the pharyngeal region, the neural floor plate, the midbrain, hindbrain and in cranial neural crest cells. Expressed in the foregut of hatching larvae. In tadpoles, expressed in the pharyngeal pouches and in other anterior endodermal regions. Within the tadpole nervous system, expressed in the neural floor plate, at high levels in the ventral midbrain and hindbrain, and at lower levels in the spinal cord. Expressed in the adult lung and brain.

It localises to the nucleus. Its function is as follows. Acts as a transcriptional activator during early development, limiting the extent of mesoderm formation in the gastrula. Binds to DNA via the target sequence 5'-GT[AC]AACA-3', with 5'-GTAAACA-3' being the preferred binding site. The sequence is that of Forkhead box protein A2-A (foxa2-a) from Xenopus laevis (African clawed frog).